Consider the following 258-residue polypeptide: Type III pantothenate kinase (258 aa).

6–13 (DVGNTNTV) is an ATP binding site. Substrate-binding positions include tyrosine 100 and 107 to 110 (GADR). The active-site Proton acceptor is the aspartate 109. Aspartate 129 provides a ligand contact to K(+). Residue threonine 132 participates in ATP binding. Position 184 (threonine 184) interacts with substrate.

Belongs to the type III pantothenate kinase family. Homodimer. NH4(+) is required as a cofactor. It depends on K(+) as a cofactor.

The protein localises to the cytoplasm. The catalysed reaction is (R)-pantothenate + ATP = (R)-4'-phosphopantothenate + ADP + H(+). Its pathway is cofactor biosynthesis; coenzyme A biosynthesis; CoA from (R)-pantothenate: step 1/5. Functionally, catalyzes the phosphorylation of pantothenate (Pan), the first step in CoA biosynthesis. This Geobacillus sp. (strain WCH70) protein is Type III pantothenate kinase.